A 237-amino-acid polypeptide reads, in one-letter code: UPF0174 protein YaaW (237 aa).

This sequence belongs to the UPF0174 family.

The chain is UPF0174 protein YaaW (yaaW) from Escherichia coli (strain K12).